We begin with the raw amino-acid sequence, 357 residues long: Alanine racemase (357 aa).

Lysine 34 serves as the catalytic Proton acceptor; specific for D-alanine. The residue at position 34 (lysine 34) is an N6-(pyridoxal phosphate)lysine. Arginine 130 contacts substrate. Residue tyrosine 253 is the Proton acceptor; specific for L-alanine of the active site. Methionine 301 serves as a coordination point for substrate.

The protein belongs to the alanine racemase family. It depends on pyridoxal 5'-phosphate as a cofactor.

It carries out the reaction L-alanine = D-alanine. The protein operates within amino-acid biosynthesis; D-alanine biosynthesis; D-alanine from L-alanine: step 1/1. In terms of biological role, catalyzes the interconversion of L-alanine and D-alanine. May also act on other amino acids. This Mannheimia succiniciproducens (strain KCTC 0769BP / MBEL55E) protein is Alanine racemase (alr).